The primary structure comprises 262 residues: Phosphatidylserine decarboxylase proenzyme (262 aa).

Catalysis depends on charge relay system; for autoendoproteolytic cleavage activity residues D86, H142, and S226. Catalysis depends on S226, which acts as the Schiff-base intermediate with substrate; via pyruvic acid; for decarboxylase activity. S226 is modified (pyruvic acid (Ser); by autocatalysis).

The protein belongs to the phosphatidylserine decarboxylase family. PSD-B subfamily. Prokaryotic type I sub-subfamily. Heterodimer of a large membrane-associated beta subunit and a small pyruvoyl-containing alpha subunit. The cofactor is pyruvate. Is synthesized initially as an inactive proenzyme. Formation of the active enzyme involves a self-maturation process in which the active site pyruvoyl group is generated from an internal serine residue via an autocatalytic post-translational modification. Two non-identical subunits are generated from the proenzyme in this reaction, and the pyruvate is formed at the N-terminus of the alpha chain, which is derived from the carboxyl end of the proenzyme. The autoendoproteolytic cleavage occurs by a canonical serine protease mechanism, in which the side chain hydroxyl group of the serine supplies its oxygen atom to form the C-terminus of the beta chain, while the remainder of the serine residue undergoes an oxidative deamination to produce ammonia and the pyruvoyl prosthetic group on the alpha chain. During this reaction, the Ser that is part of the protease active site of the proenzyme becomes the pyruvoyl prosthetic group, which constitutes an essential element of the active site of the mature decarboxylase.

It localises to the cell membrane. The catalysed reaction is a 1,2-diacyl-sn-glycero-3-phospho-L-serine + H(+) = a 1,2-diacyl-sn-glycero-3-phosphoethanolamine + CO2. It participates in phospholipid metabolism; phosphatidylethanolamine biosynthesis; phosphatidylethanolamine from CDP-diacylglycerol: step 2/2. In terms of biological role, catalyzes the formation of phosphatidylethanolamine (PtdEtn) from phosphatidylserine (PtdSer). In Bacillus cereus (strain AH820), this protein is Phosphatidylserine decarboxylase proenzyme.